We begin with the raw amino-acid sequence, 578 residues long: Longifolene synthase (578 aa).

Residues D331, D335, and D475 each contribute to the Mg(2+) site. A DDXXD motif motif is present at residues 331–335; the sequence is DDLYD.

It belongs to the terpene synthase family. Tpsd subfamily. Mg(2+) is required as a cofactor. Mn(2+) serves as cofactor.

Its subcellular location is the cytoplasm. The catalysed reaction is (2E,6E)-farnesyl diphosphate = longifolene + diphosphate. The protein operates within sesquiterpene biosynthesis. It participates in terpene metabolism; oleoresin biosynthesis. Functionally, involved in defensive oleoresin formation in conifers in response to insect attack or other injury. Involved in sesquiterpene (C15) olefins biosynthesis. Produces mainly longifolene, but also multiple minor products including alpha-longipinene, alpha-longicyclene, E-beta-farnesene, longiborneol, cyclosativene, beta-longipinene, and 12 other sesquiterpenes when used with farnesyl diphosphate (FPP) as substrate. This chain is Longifolene synthase (TPS-Lon), found in Picea abies (Norway spruce).